The sequence spans 253 residues: Fatty acid elongase 5 (253 aa).

Transmembrane regions (helical) follow at residues 24–44 (IFVS…LVII), 60–80 (IMMI…ISLA), 100–120 (FWIF…VLMI), 127–147 (QLSF…GLLL), 150–170 (GIGN…HFLM), 188–208 (ILTK…SLAP), and 214–234 (FALQ…ILFL). The HxxHH motif motif lies at 132–136 (HIYHH). The active-site Nucleophile is His135.

This sequence belongs to the ELO family.

It localises to the membrane. The enzyme catalyses an acyl-CoA + malonyl-CoA + H(+) = a 3-oxoacyl-CoA + CO2 + CoA. Its pathway is lipid metabolism; polyunsaturated fatty acid biosynthesis. Involved in the synthesis of fatty acids. Elongates C20 polyunsaturated fatty acids (PUFAs) with a preference for n-6 PUFAs. The polypeptide is Fatty acid elongase 5 (Trypanosoma cruzi (strain CL Brener)).